The sequence spans 548 residues: Glucose-6-phosphate isomerase (548 aa).

E354 serves as the catalytic Proton donor. Active-site residues include H385 and K513.

Belongs to the GPI family.

It is found in the cytoplasm. The enzyme catalyses alpha-D-glucose 6-phosphate = beta-D-fructose 6-phosphate. It functions in the pathway carbohydrate biosynthesis; gluconeogenesis. It participates in carbohydrate degradation; glycolysis; D-glyceraldehyde 3-phosphate and glycerone phosphate from D-glucose: step 2/4. Its function is as follows. Catalyzes the reversible isomerization of glucose-6-phosphate to fructose-6-phosphate. This Marinomonas sp. (strain MWYL1) protein is Glucose-6-phosphate isomerase.